A 295-amino-acid polypeptide reads, in one-letter code: Diaminopimelate epimerase (295 aa).

Positions 11 and 67 each coordinate substrate. The active-site Proton donor is the Cys76. Substrate contacts are provided by residues 77–78 (GN), Asn171, Asn210, and 228–229 (ER). The active-site Proton acceptor is Cys237. Residue 238 to 239 (GT) participates in substrate binding.

Belongs to the diaminopimelate epimerase family. Homodimer.

The protein resides in the cytoplasm. It catalyses the reaction (2S,6S)-2,6-diaminopimelate = meso-2,6-diaminopimelate. It participates in amino-acid biosynthesis; L-lysine biosynthesis via DAP pathway; DL-2,6-diaminopimelate from LL-2,6-diaminopimelate: step 1/1. In terms of biological role, catalyzes the stereoinversion of LL-2,6-diaminopimelate (L,L-DAP) to meso-diaminopimelate (meso-DAP), a precursor of L-lysine. In Methanocaldococcus jannaschii (strain ATCC 43067 / DSM 2661 / JAL-1 / JCM 10045 / NBRC 100440) (Methanococcus jannaschii), this protein is Diaminopimelate epimerase.